We begin with the raw amino-acid sequence, 476 residues long: MAKEQVQAITKMEEDFAQWYTDIVKKAELVDYSSVKGCMILRPYGYALWENMQKVMDEKLKATSHENVYMPMFIPESLLQKEKDHVEGFAPEVAWVTHGGDEKLAERLCVRPTSETLFCEHFSKIVQSYNDLPKLYNQWCSVVRWEKTTRPFLRTTEFLWQEGHTIHETAEESQAETLNILNLYASFCEDYLAIPVIKGQKTEKEKFAGAKATYTIESLMHDGKALQTGTSHNFGTNFSEAFDIKFLDRNGKWQYVHQTSWGVSTRMIGGLIMVHSDNNGLVMPPKVAPVQVVIVPIAQHKEGVLAKATELQGHIQKVARVKIDASNKTPGWKFNEYEMKGIPIRLEVGPKDIEKNQVVLVRRDTKEKEFISMDQLEERIPALLEEIHNSLFNKAKVFRDENTYSVTSFEEMKKVADEKQGFIKAMWCGELACEEKLKEEVGVSSRCMPFEQEHLAEECVCCGKEAKQMVYWGKAY.

Belongs to the class-II aminoacyl-tRNA synthetase family. ProS type 3 subfamily. In terms of assembly, homodimer.

The protein resides in the cytoplasm. The catalysed reaction is tRNA(Pro) + L-proline + ATP = L-prolyl-tRNA(Pro) + AMP + diphosphate. Its function is as follows. Catalyzes the attachment of proline to tRNA(Pro) in a two-step reaction: proline is first activated by ATP to form Pro-AMP and then transferred to the acceptor end of tRNA(Pro). This chain is Proline--tRNA ligase 2, found in Bacillus thuringiensis (strain Al Hakam).